Reading from the N-terminus, the 598-residue chain is Terpenoid synthase 1 (598 aa).

Mg(2+) is bound by residues Asp-362, Asp-366, Asn-494, and Asp-502. The DDXXD motif signature appears at 362 to 366; it reads DDTCD.

This sequence belongs to the terpene synthase family. Tpsa subfamily. The cofactor is Mg(2+). It depends on Mn(2+) as a cofactor. In terms of tissue distribution, expressed exclusively in siliques.

It localises to the cytoplasm. It functions in the pathway secondary metabolite biosynthesis; terpenoid biosynthesis. The polypeptide is Terpenoid synthase 1 (TPS01) (Arabidopsis thaliana (Mouse-ear cress)).